A 91-amino-acid chain; its full sequence is Cytochrome b-c1 complex subunit 6, mitochondrial (91 aa).

A mitochondrion-targeting transit peptide spans 1-13 (MGLEDEQKMLTES). The disordered stretch occupies residues 1–30 (MGLEDEQKMLTESGDPEEEEEEEEELVDPL). The segment covering 14–27 (GDPEEEEEEEEELV) has biased composition (acidic residues). Cystine bridges form between C37–C81 and C53–C67. K42 carries the N6-acetyllysine modification. K85 carries the post-translational modification N6-acetyllysine.

This sequence belongs to the UQCRH/QCR6 family. As to quaternary structure, component of the ubiquinol-cytochrome c oxidoreductase (cytochrome b-c1 complex, complex III, CIII), a multisubunit enzyme composed of 11 subunits. The complex is composed of 3 respiratory subunits cytochrome b, cytochrome c1 and Rieske protein UQCRFS1, 2 core protein subunits UQCRC1/QCR1 and UQCRC2/QCR2, and 6 low-molecular weight protein subunits UQCRH/QCR6, UQCRB/QCR7, UQCRQ/QCR8, UQCR10/QCR9, UQCR11/QCR10 and subunit 9, the cleavage product of Rieske protein UQCRFS1. The complex exists as an obligatory dimer and forms supercomplexes (SCs) in the inner mitochondrial membrane with NADH-ubiquinone oxidoreductase (complex I, CI) and cytochrome c oxidase (complex IV, CIV), resulting in different assemblies (supercomplex SCI(1)III(2)IV(1) and megacomplex MCI(2)III(2)IV(2)).

It localises to the mitochondrion inner membrane. Its function is as follows. Component of the ubiquinol-cytochrome c oxidoreductase, a multisubunit transmembrane complex that is part of the mitochondrial electron transport chain which drives oxidative phosphorylation. The respiratory chain contains 3 multisubunit complexes succinate dehydrogenase (complex II, CII), ubiquinol-cytochrome c oxidoreductase (cytochrome b-c1 complex, complex III, CIII) and cytochrome c oxidase (complex IV, CIV), that cooperate to transfer electrons derived from NADH and succinate to molecular oxygen, creating an electrochemical gradient over the inner membrane that drives transmembrane transport and the ATP synthase. The cytochrome b-c1 complex catalyzes electron transfer from ubiquinol to cytochrome c, linking this redox reaction to translocation of protons across the mitochondrial inner membrane, with protons being carried across the membrane as hydrogens on the quinol. In the process called Q cycle, 2 protons are consumed from the matrix, 4 protons are released into the intermembrane space and 2 electrons are passed to cytochrome c. The protein is Cytochrome b-c1 complex subunit 6, mitochondrial (UQCRH) of Homo sapiens (Human).